Consider the following 1961-residue polypeptide: Ankyrin-3 (1961 aa).

The segment covering 1–10 (MSEEPKEKPA) has biased composition (basic and acidic residues). The tract at residues 1–25 (MSEEPKEKPAKPAHRKRKGKKSDAN) is disordered. The segment covering 11–20 (KPAHRKRKGK) has biased composition (basic residues). The residue at position 22 (Ser-22) is a Phosphoserine. ANK repeat units follow at residues 56–85 (NGLNALHLASKEGHVEVVSELLQREANVDA), 89–118 (KGNTALHIASLAGQAEVVKVLVTNGANVNA), 122–151 (NGFTPLYMAAQENHLEVVRFLLDNGASQSL), 155–184 (DGFTPLAVALQQGHDQVVSLLLENDTKGKV), 186–213 (LPALHIAARKDDTKAAALLLQNDTNADV), 217–246 (SGFTPLHIAAHYGNINVATLLLNRAAAVDF), 250–279 (NDITPLHVASKRGNANMVKLLLDRGAKIDA), 283–312 (DGLTPLHCGARSGHEQVVEMLLDRSAPILS), 316–345 (NGLSPLHMATQGDHLNCVQLLLQHNVPVDD), 349–378 (DYLTALHVAAHCGHYKVAKVLLDKKASPNA), 382–411 (NGFTPLHIACKKNRIRVMELLLKHGASIQA), 415–444 (SGLTPIHVAAFMGHVNIVSQLMHHGASPNT), 448–477 (RGETALHMAARSGQAEVVRYLVQDGAQVEA), 481–510 (DDQTPLHISARLGKADIVQQLLQQGASPNA), 514–543 (SGYTPLHLAAREGHEDVAAFLLDHGASLSI), 547–576 (KGFTPLHVAAKYGKLEVASLLLQKSASPDA), 580–609 (SGLTPLHVAAHYDNQKVALLLLDQGASPHA), 613–642 (NGYTPLHIAAKKNQMDIATSLLEYGADANA), 646–675 (QGIASVHLAAQEGHVDMVSLLLSRNANVNL), 679–708 (SGLTPLHLAAQEDRVNVAEVLVNQGAHVDA), 712–741 (MGYTPLHVGCHYGNIKIVNFLLQHSAKVNA), 745–774 (NGYTALHQAAQQGHTHIINVLLQNNASPNE), and 778–807 (NGNTALAIARRLGYISVVDTLKVVTEEIMT). Ser-606 bears the Phosphoserine mark. A Phosphoserine modification is found at Leu-732. Phosphoserine is present on residues Ser-830, Ser-844, Ser-850, Ser-873, Ser-914, Ser-917, Ser-923, Ser-958, Ser-960, and Ser-1114. 2 consecutive ZU5 domains span residues 985-1140 (FLVS…VVSR) and 1142-1289 (KQES…LADC). The interval 1274-1408 (VSFTTNVSAR…SIKIRDTSQE (135 aa)) is UPA domain. Phosphoserine occurs at positions 1451, 1462, 1470, 1473, and 1560. The 85-residue stretch at 1478–1562 (TDIRMAIVAD…DIVTLLEGPI (85 aa)) folds into the Death domain. Disordered regions lie at residues 1606 to 1678 (PNPF…DPLD), 1698 to 1740 (SVPG…VTED), 1784 to 1818 (WQNETPSGSLESPAQARRLTGGLLDRLDDSSDQAR), 1844 to 1884 (PEAK…PVSP), and 1915 to 1961 (MTRT…KKTH). The segment covering 1725–1740 (QQEKGKSGPDEEVTED) has biased composition (basic and acidic residues). The span at 1784–1795 (WQNETPSGSLES) shows a compositional bias: polar residues. Phosphoserine is present on residues Ser-1795, Ser-1813, and Ser-1883. Basic and acidic residues predominate over residues 1808 to 1818 (DRLDDSSDQAR). Basic and acidic residues predominate over residues 1933–1961 (GSTRSEPKQGEGYKVKTKKEIRNVEKKTH).

As to quaternary structure, may be a constituent of a NFASC/NRCAM/ankyrin G complex. Interacts with RHBG. Directly interacts with DMD and betaDAG1; this interaction does not interfere with DMD-binding and is required for DMD and betaDAG1 retention at costameres. Interacts (via N-terminal ANK repeats) with SCHIP1 isoform 7 (via C-terminus); this interaction is required for the localization at axon initial segments (AISs) and nodes of Ranvier (NRs). Interacts with PLEC and FLNC. Interacts with KCNA1; this inhibits channel activity. Interacts with SCN5A. Interacts with PKP2 and GJA1/CX43. Expressed in many epithelial tissues, muscles and axons. Expressed in kidney, brain, skin, lung, liver, intestine, pancreas, heart and testis (at protein level). In testis, expressed in Leydig cells, but very weakly or not at all in Sertoli cells or seminiferous tubules. Expressed in macrophages (at protein level).

The protein localises to the cytoplasm. The protein resides in the cytoskeleton. Its subcellular location is the cell projection. It is found in the axon. It localises to the cell membrane. The protein localises to the sarcolemma. The protein resides in the postsynaptic cell membrane. Its subcellular location is the lysosome. It is found in the T-tubule. Functionally, membrane-cytoskeleton linker. May participate in the maintenance/targeting of ion channels and cell adhesion molecules at the nodes of Ranvier and axonal initial segments. In skeletal muscle, required for costamere localization of DMD and betaDAG1. Regulates KCNA1 channel activity in function of dietary Mg(2+) levels, and thereby contributes to the regulation of renal Mg(2+) reabsorption. Required for intracellular adhesion and junctional conductance in myocytes, potentially via stabilization of GJA1/CX43 protein abundance and promotion of PKP2, GJA1/CX43, and SCN5A/Nav1.5 localization to cell-cell junctions. This is Ankyrin-3 (Ank3) from Mus musculus (Mouse).